The sequence spans 463 residues: Interferon-inducible GTPase 5 (463 aa).

The region spanning 52 to 234 is the IRG-type G domain; the sequence is TRLEVGVTGE…PMLVTTWEHD (183 aa). Residues 61–68, 86–90, 168–170, and 215–217 contribute to the GTP site; these read ESGAGKSS, TGVVE, KVD, and SNL. 2 positions are modified to phosphoserine: serine 246 and serine 303. The interval 409–438 is disordered; that stretch reads QGEVSLEAAGDNAVEKRSSGEGTSEEAPLS.

This sequence belongs to the TRAFAC class dynamin-like GTPase superfamily. IRG family.

The protein resides in the cell projection. Its subcellular location is the cilium. It localises to the flagellum. The protein localises to the lipid droplet. It catalyses the reaction GTP + H2O = GDP + phosphate + H(+). Its function is as follows. Required for sperm motility and therefore male fertility, via positive regulation of spermatozoa fibrous sheath formation. The chain is Interferon-inducible GTPase 5 (Irgc) from Rattus norvegicus (Rat).